The primary structure comprises 785 residues: Toll-like receptor 2 (785 aa).

An N-terminal signal peptide occupies residues 1–17 (MSRVLWTLWVLGAVTNL). Topologically, residues 18-589 (SKEEAPDQSS…RLSVSECHRT (572 aa)) are extracellular. Cys-31 and Cys-37 are joined by a disulfide. 19 LRR repeats span residues 54 to 77 (AVRS…RDCV), 78 to 101 (NLKA…LSLW), 102 to 125 (SLEH…RPLS), 126 to 150 (SLKF…SQLT), 151 to 175 (NLRI…AGLT), 176 to 199 (FLEE…KSIQ), 200 to 223 (NISY…DLSS), 224 to 250 (SLKH…ETHT), 251 to 278 (LVKK…NYVS), 279 to 308 (GVLE…KNIG), 309 to 337 (QIET…SLTE), 338 to 361 (DVKR…QHLK), 362 to 388 (SLEY…DAWP), 389 to 414 (SLQT…LTLK), 415 to 437 (NLTN…QWPE), 438 to 457 (KMKY…GCIP), 458 to 478 (KTLE…LNLP), 479 to 500 (QLKE…SLLP), and 501 to 524 (MLLV…DSFH). N-linked (GlcNAc...) asparagine glycosylation is present at Asn-115. 2 N-linked (GlcNAc...) asparagine glycosylation sites follow: Asn-200 and Asn-246. Cys-354 and Cys-383 are oxidised to a cystine. N-linked (GlcNAc...) asparagine glycosylation is found at Asn-415 and Asn-443. Cys-433 and Cys-455 are joined by a disulfide. One can recognise an LRRCT domain in the interval 525 to 579 (TLKTLEAGGNNFICSCEFLSFTQEQQALAKVLIDWPANYLCDSPSHVRGQQVQDV). The helical transmembrane segment at 590–610 (ALVSGMCCALFLLILLTEVLC) threads the bilayer. At 611 to 785 (HRFHGLWYMR…WLNLRTAIKS (175 aa)) the chain is on the cytoplasmic side. Residues 640-783 (VCYDAFVSYS…GFWLNLRTAI (144 aa)) form the TIR domain. Lys-755 participates in a covalent cross-link: Glycyl lysine isopeptide (Lys-Gly) (interchain with G-Cter in ubiquitin). Residues 762–779 (YLEWPTDDAQQEGFWLNL) carry the ATG16L1-binding motif motif.

It belongs to the Toll-like receptor family. In terms of assembly, interacts with LY96, TLR1 and TLR6 (via extracellular domain). TLR2 seems to exist in heterodimers with either TLR1 or TLR6 before stimulation by the ligand. The heterodimers form bigger oligomers in response to their corresponding ligands as well as further heterotypic associations with other receptors such as CD14 and/or CD36. Binds MYD88 (via TIR domain). Interacts with TICAM1. Interacts with CNPY3. Interacts with ATG16L1. Interacts with PPP1R11. Interacts with TICAM2. Interacts with TIRAP. In terms of processing, ubiquitinated at Lys-755 by PPP1R11, leading to its degradation. Deubiquitinated by USP2. Glycosylation of Asn-443 is critical for secretion of the N-terminal ectodomain of TLR2.

It is found in the membrane. The protein resides in the cytoplasmic vesicle. The protein localises to the phagosome membrane. It localises to the membrane raft. Cooperates with LY96 to mediate the innate immune response to bacterial lipoproteins and other microbial cell wall components. Cooperates with TLR1 or TLR6 to mediate the innate immune response to bacterial lipoproteins or lipopeptides. Acts via MYD88 and TRAF6, leading to NF-kappa-B activation, cytokine secretion and the inflammatory response. May also promote apoptosis in response to lipoproteins. Forms activation clusters composed of several receptors depending on the ligand, these clusters trigger signaling from the cell surface and subsequently are targeted to the Golgi in a lipid-raft dependent pathway. Forms the cluster TLR2:TLR6:CD14:CD36 in response to diacylated lipopeptides and TLR2:TLR1:CD14 in response to triacylated lipopeptides. The polypeptide is Toll-like receptor 2 (TLR2) (Canis lupus familiaris (Dog)).